The following is a 187-amino-acid chain: Peptidyl-tRNA hydrolase (187 aa).

A tRNA-binding site is contributed by Tyr-14. Residue His-19 is the Proton acceptor of the active site. Residues Tyr-60, Asn-62, and Asn-108 each contribute to the tRNA site.

It belongs to the PTH family. In terms of assembly, monomer.

The protein localises to the cytoplasm. The enzyme catalyses an N-acyl-L-alpha-aminoacyl-tRNA + H2O = an N-acyl-L-amino acid + a tRNA + H(+). Its function is as follows. Hydrolyzes ribosome-free peptidyl-tRNAs (with 1 or more amino acids incorporated), which drop off the ribosome during protein synthesis, or as a result of ribosome stalling. In terms of biological role, catalyzes the release of premature peptidyl moieties from peptidyl-tRNA molecules trapped in stalled 50S ribosomal subunits, and thus maintains levels of free tRNAs and 50S ribosomes. The sequence is that of Peptidyl-tRNA hydrolase from Mycoplasmopsis synoviae (strain 53) (Mycoplasma synoviae).